Consider the following 906-residue polypeptide: MKLGYGEFSWPTGEAYHGQFYRDHFHGLGTYTWPDGSSFTGTFYLSQREGYGTMHTKTMLFQGLYKEDQRFGPGIETYPDGSQDVGLWFREYLLKLCTRVPSGFSLVNYPEFLAFLTKSRRRLDLSDEKVELGLSEEQDPFFYDYKQYLLNDELKLPPEMHVYSTDNSHLPMTDSLRQELDDHIFMNEIPPFIEDEEPWLITNETPLLVKIQKQTYKFRNKDAHTSWNIPAILEGNRSRFGPSGPKEQISKKMIMKAEEGDYNWIFGILRDNLACADVADSKGYTVLAAAAMHSHLDIVNLLLDFGADVNKRSDEGITPLSMCFLQYYPCKSFHPNIAERTLLQESPKSLVTPKISFLLADANIDYLYDVGMPIAGGDELKTSSLDDSLASMQTPESSNMLHKEEVSPVKTVSTDVEKESEGAAENVDASTLYSVDTNFESTKCLRNYTINVSRDIMEKSAQAYSSLPQHPCFPYKGTVRKMAQSMVERRNRWMTITLLLRRGADPNLCQVPMQALFLAVKAGDVEGVRLLLMSGAQTDIQFPPQLQSLTPLHIAVSLPGEEGVKITELLLHVITNVDAKAADEDYVYKGGKADLLPSSLKLNNEPGPPKSFYSTHTFIPEEGGRTALHVACEREDNKKCARDIVRLLLSHRANPNVLWSGHSPLSLAIASGNDLVVKELLSQGADPNLPLTKGLGTALCVVCDLVYEQQRSVENKIALIDRLISYGADVLNPVTLVQGDRTAVGTAVDYGYFKFFQDRKIAHCPFHALMPAEREVFMARKRLLEYLGLQLRLAVLSKESRLDTKALYLSKRAELAPCHRLKKKGSSSVRTQSSEKQSIPFYKFCYQCGRSIGVRLSPCPRCYGILTCSKYCKTKAWIEFHKKDCNDIMAMIPHLEGSAWRVAESP.

MORN repeat units lie at residues 16–38, 39–59, and 61–83; these read YHGQ…DGSS, FTGT…TKTM, and FQGL…DGSQ. The ANK 1 repeat unit spans residues 282–311; that stretch reads KGYTVLAAAAMHSHLDIVNLLLDFGADVNK. Polar residues predominate over residues 391–400; it reads SMQTPESSNM. The tract at residues 391-411 is disordered; sequence SMQTPESSNMLHKEEVSPVKT. ANK repeat units follow at residues 479–508, 511–540, 547–579, 623–657, 660–689, and 701–732; these read VRKM…DPNL, VPMQ…QTDI, QSLT…NVDA, GGRT…NPNV, SGHS…DPNL, and VVCD…DVLN. Positions 845, 848, 859, 862, 868, 872, 881, and 885 each coordinate Zn(2+). The segment at 845–885 adopts an MYND-type zinc-finger fold; it reads CYQCGRSIGVRLSPCPRCYGILTCSKYCKTKAWIEFHKKDC.

In Mus musculus (Mouse), this protein is Ankyrin repeat and MYND domain-containing protein 1 (Ankmy1).